The following is a 100-amino-acid chain: MITKEEAQKIAKLARLKFEEDTVEKFFTQLSTIMDMIDILNEIDCKDIEPLTSVCNMNARMREDAVTSSDLSSELFDNVSGNSTQLAKEVKYFITPKVVE.

Belongs to the GatC family. In terms of assembly, heterotrimer of A, B and C subunits.

The enzyme catalyses L-glutamyl-tRNA(Gln) + L-glutamine + ATP + H2O = L-glutaminyl-tRNA(Gln) + L-glutamate + ADP + phosphate + H(+). It catalyses the reaction L-aspartyl-tRNA(Asn) + L-glutamine + ATP + H2O = L-asparaginyl-tRNA(Asn) + L-glutamate + ADP + phosphate + 2 H(+). Functionally, allows the formation of correctly charged Asn-tRNA(Asn) or Gln-tRNA(Gln) through the transamidation of misacylated Asp-tRNA(Asn) or Glu-tRNA(Gln) in organisms which lack either or both of asparaginyl-tRNA or glutaminyl-tRNA synthetases. The reaction takes place in the presence of glutamine and ATP through an activated phospho-Asp-tRNA(Asn) or phospho-Glu-tRNA(Gln). This chain is Aspartyl/glutamyl-tRNA(Asn/Gln) amidotransferase subunit C, found in Rickettsia africae (strain ESF-5).